A 246-amino-acid polypeptide reads, in one-letter code: Electron transfer flavoprotein beta subunit lysine methyltransferase (246 aa).

It belongs to the methyltransferase superfamily. ETFBKMT family.

It is found in the cytoplasm. The protein localises to the mitochondrion matrix. It carries out the reaction L-lysyl-[protein] + 3 S-adenosyl-L-methionine = N(6),N(6),N(6)-trimethyl-L-lysyl-[protein] + 3 S-adenosyl-L-homocysteine + 3 H(+). Functionally, protein-lysine methyltransferase that selectively trimethylates the flavoprotein ETFB in mitochondria. Thereby, may negatively regulate the function of ETFB in electron transfer from Acyl-CoA dehydrogenases to the main respiratory chain. The protein is Electron transfer flavoprotein beta subunit lysine methyltransferase (etfbkmt) of Xenopus laevis (African clawed frog).